The primary structure comprises 135 residues: Large ribosomal subunit protein uL16c (135 aa).

Belongs to the universal ribosomal protein uL16 family. In terms of assembly, part of the 50S ribosomal subunit.

It is found in the plastid. The protein localises to the chloroplast. This chain is Large ribosomal subunit protein uL16c, found in Drimys granadensis.